We begin with the raw amino-acid sequence, 141 residues long: Galactose-6-phosphate isomerase subunit LacA (141 aa).

This sequence belongs to the LacAB/RpiB family. Heteromultimeric protein consisting of LacA and LacB.

It carries out the reaction aldehydo-D-galactose 6-phosphate = keto-D-tagatose 6-phosphate. It functions in the pathway carbohydrate metabolism; D-galactose 6-phosphate degradation; D-tagatose 6-phosphate from D-galactose 6-phosphate: step 1/1. The sequence is that of Galactose-6-phosphate isomerase subunit LacA from Streptococcus pneumoniae (strain Taiwan19F-14).